A 201-amino-acid chain; its full sequence is Regulator of G-protein signaling rgs-1 (201 aa).

An RGS domain is found at 37-156; it reads SWQQSFDTLM…FLTSIFYRET (120 aa). The tract at residues 168–201 is disordered; sequence GGDEEKEREQRAERARLNVPATAAEGSSKDISMV. A compositionally biased stretch (basic and acidic residues) spans 170–183; that stretch reads DEEKEREQRAERAR.

As to expression, expressed in most or all neurons.

Its function is as follows. Inhibits G protein signaling in nervous system, interacting preferentially with the G(O) subfamily member goa-1. In vitro, protein acts as a GTPase activator of goa-1. Rgs-1 and rgs-2 redundantly adjust signaling when worms are fed to allow rapid induction of egg-laying behavior. The polypeptide is Regulator of G-protein signaling rgs-1 (rgs-1) (Caenorhabditis elegans).